The chain runs to 794 residues: Histone-lysine N-methyltransferase, H3 lysine-9 specific SUVH5 (794 aa).

Disordered stretches follow at residues 187 to 210 (VGRDLSPNMGSKFSKNGKTAKRSI) and 254 to 276 (SPVKPSEKRNGDYGEGSMRKNSE). The span at 194–203 (NMGSKFSKNG) shows a compositional bias: polar residues. Basic and acidic residues predominate over residues 258–276 (PSEKRNGDYGEGSMRKNSE). In terms of domain architecture, YDG spans 365-515 (GTVPGVEVGD…KLVFKFKLRR (151 aa)). The 60-residue stretch at 585–644 (KSCGCTNGCSKSKNCACIVKNGGKIPYYDGAIVEIKPLVYECGPHCKCPPSCNMRVSQHG) folds into the Pre-SET domain. The SET domain occupies 647–764 (IKLEIFKTES…PLQELSYDYN (118 aa)). The Post-SET domain maps to 778–794 (KKKFCYCGSAECSGRLY).

Belongs to the class V-like SAM-binding methyltransferase superfamily. Histone-lysine methyltransferase family. Suvar3-9 subfamily. In terms of tissue distribution, expressed in leaves stems and flowers.

It localises to the nucleus. The protein resides in the chromosome. The protein localises to the centromere. The catalysed reaction is N(6)-methyl-L-lysyl(9)-[histone H3] + S-adenosyl-L-methionine = N(6),N(6)-dimethyl-L-lysyl(9)-[histone H3] + S-adenosyl-L-homocysteine + H(+). The enzyme catalyses L-lysyl(9)-[histone H3] + S-adenosyl-L-methionine = N(6)-methyl-L-lysyl(9)-[histone H3] + S-adenosyl-L-homocysteine + H(+). Functionally, histone methyltransferase. Methylates 'Lys-9' of histone H3. H3 'Lys-9' methylation represents a specific tag for epigenetic transcriptional repression. The protein is Histone-lysine N-methyltransferase, H3 lysine-9 specific SUVH5 (SUVH5) of Arabidopsis thaliana (Mouse-ear cress).